Reading from the N-terminus, the 413-residue chain is Multifunctional CCA protein (413 aa).

ATP-binding residues include G8 and R11. CTP-binding residues include G8 and R11. Mg(2+)-binding residues include D21 and D23. Residues R91, R143, and R146 each contribute to the ATP site. CTP-binding residues include R91, R143, and R146. The HD domain maps to 232-333; it reads TGVHVMMVVD…VRLFERSDAL (102 aa).

The protein belongs to the tRNA nucleotidyltransferase/poly(A) polymerase family. Bacterial CCA-adding enzyme type 1 subfamily. As to quaternary structure, monomer. Can also form homodimers and oligomers. Requires Mg(2+) as cofactor. Ni(2+) is required as a cofactor.

The enzyme catalyses a tRNA precursor + 2 CTP + ATP = a tRNA with a 3' CCA end + 3 diphosphate. The catalysed reaction is a tRNA with a 3' CCA end + 2 CTP + ATP = a tRNA with a 3' CCACCA end + 3 diphosphate. Its function is as follows. Catalyzes the addition and repair of the essential 3'-terminal CCA sequence in tRNAs without using a nucleic acid template. Adds these three nucleotides in the order of C, C, and A to the tRNA nucleotide-73, using CTP and ATP as substrates and producing inorganic pyrophosphate. tRNA 3'-terminal CCA addition is required both for tRNA processing and repair. Also involved in tRNA surveillance by mediating tandem CCA addition to generate a CCACCA at the 3' terminus of unstable tRNAs. While stable tRNAs receive only 3'-terminal CCA, unstable tRNAs are marked with CCACCA and rapidly degraded. The polypeptide is Multifunctional CCA protein (Burkholderia cenocepacia (strain HI2424)).